A 416-amino-acid polypeptide reads, in one-letter code: Enolase (416 aa).

Gln160 contributes to the (2R)-2-phosphoglycerate binding site. Glu204 acts as the Proton donor in catalysis. Mg(2+) is bound by residues Asp239, Glu280, and Asp306. Lys331, Arg360, Ser361, and Lys382 together coordinate (2R)-2-phosphoglycerate. Lys331 functions as the Proton acceptor in the catalytic mechanism.

The protein belongs to the enolase family. The cofactor is Mg(2+).

It is found in the cytoplasm. It localises to the secreted. The protein localises to the cell surface. The enzyme catalyses (2R)-2-phosphoglycerate = phosphoenolpyruvate + H2O. It participates in carbohydrate degradation; glycolysis; pyruvate from D-glyceraldehyde 3-phosphate: step 4/5. Its function is as follows. Catalyzes the reversible conversion of 2-phosphoglycerate (2-PG) into phosphoenolpyruvate (PEP). It is essential for the degradation of carbohydrates via glycolysis. The protein is Enolase of Sulfurisphaera tokodaii (strain DSM 16993 / JCM 10545 / NBRC 100140 / 7) (Sulfolobus tokodaii).